A 136-amino-acid polypeptide reads, in one-letter code: Putative pre-16S rRNA nuclease (136 aa).

The protein belongs to the YqgF nuclease family.

Its subcellular location is the cytoplasm. In terms of biological role, could be a nuclease involved in processing of the 5'-end of pre-16S rRNA. The protein is Putative pre-16S rRNA nuclease of Francisella tularensis subsp. novicida (strain U112).